A 127-amino-acid polypeptide reads, in one-letter code: Protein translocase subunit SecE (127 aa).

Helical transmembrane passes span 16 to 36 (AMKWIVVAILLIVAIVGNYLY), 41 to 61 (LPLRALAVVILIAAAGGVALL), and 96 to 116 (IVAAVTAVMSLILWGLDGILV).

This sequence belongs to the SecE/SEC61-gamma family. In terms of assembly, component of the Sec protein translocase complex. Heterotrimer consisting of SecY, SecE and SecG subunits. The heterotrimers can form oligomers, although 1 heterotrimer is thought to be able to translocate proteins. Interacts with the ribosome. Interacts with SecDF, and other proteins may be involved. Interacts with SecA.

It is found in the cell inner membrane. Functionally, essential subunit of the Sec protein translocation channel SecYEG. Clamps together the 2 halves of SecY. May contact the channel plug during translocation. This Salmonella typhi protein is Protein translocase subunit SecE.